A 2588-amino-acid chain; its full sequence is Histone-lysine N-methyltransferase, H3 lysine-36 specific (2588 aa).

2 positions are modified to phosphoserine: Ser-110 and Ser-118. Disordered regions lie at residues Gly-209–Thr-264 and Leu-277–Glu-307. Residues Glu-235–Asn-249 are compositionally biased toward basic and acidic residues. A compositionally biased stretch (polar residues) spans Gly-298 to Glu-307. 2 positions are modified to phosphoserine: Ser-380 and Ser-383. Residues Ser-383 to Ile-403 form a disordered region. Lys-802 is covalently cross-linked (Glycyl lysine isopeptide (Lys-Gly) (interchain with G-Cter in SUMO2)). Disordered stretches follow at residues Ala-830–Arg-899, Glu-947–Glu-987, and Phe-1008–Asn-1133. Residues Gly-855–Gln-874 are compositionally biased toward polar residues. Positions Ser-881–Ala-895 are enriched in low complexity. Over residues Phe-1008–Pro-1033 the composition is skewed to basic and acidic residues. Residues Pro-1054–Asn-1073 are compositionally biased toward basic residues. Residue Lys-1237 forms a Glycyl lysine isopeptide (Lys-Gly) (interchain with G-Cter in SUMO2) linkage. The interval Ala-1279 to Lys-1324 is disordered. Ser-1408 bears the Phosphoserine mark. 3 PHD-type zinc fingers span residues Glu-1441–Gly-1487, Ile-1488–Ala-1544, and Val-1605–Gly-1649. A PWWP domain is found at Tyr-1654 to Gly-1716. Positions Ser-1788–Gln-1838 constitute an AWS domain. The SET domain maps to Pro-1840–Asn-1957. S-adenosyl-L-methionine is bound by residues Arg-1850–Trp-1852, Thr-1892–Tyr-1895, Asn-1918–His-1919, Asn-1963, and Lys-1969. The tract at residues Leu-1958 to Gly-1964 is inhibits enzyme activity in the absence of bound histone. Residues Gly-1964–Gly-1980 enclose the Post-SET domain. The disordered stretch occupies residues Val-1989 to Glu-2010. Over residues Arg-1995 to Arg-2006 the composition is skewed to basic residues. The PHD-type 4; atypical zinc-finger motif lies at Glu-2016–Asp-2063. Disordered regions lie at residues Pro-2105–Glu-2320, Lys-2333–His-2423, Tyr-2447–Gly-2521, and Arg-2560–Lys-2588. A compositionally biased stretch (basic and acidic residues) spans Arg-2179–Asp-2196. Over residues Gly-2201 to Arg-2212 the composition is skewed to polar residues. Basic and acidic residues predominate over residues Pro-2213–Pro-2223. Positions Ser-2232–Glu-2249 are enriched in low complexity. The segment covering Arg-2250 to Lys-2261 has biased composition (basic and acidic residues). Phosphoserine is present on Ser-2267. Position 2360 is a phosphothreonine (Thr-2360). The residue at position 2369 (Ser-2369) is a Phosphoserine. Residue Lys-2509 forms a Glycyl lysine isopeptide (Lys-Gly) (interchain with G-Cter in SUMO2) linkage.

The protein belongs to the class V-like SAM-binding methyltransferase superfamily. Interacts with AR DNA- and ligand-binding domains. Interacts with the ligand-binding domains of RARA and THRA in the absence of ligand; in the presence of ligand the interaction is severely disrupted but some binding still occurs. Interacts with the ligand-binding domains of RXRA and ESRRA only in the presence of ligand. Interacts with ZNF496. Expressed in the embryo and the outer region of the uterine decidua at early post-implantation 5.5 dpc stage. Uniformly expressed in embryonic and extraembryonic tissues during gastrulation stage 7.5 dpc. Expressed differentially after stage 14.5 dpc with highest expression in proliferating cells. Enriched in the telencephalic region of the brain, spinal cord, intestinal crypt, tooth buds, thymus and salivary glands at stage 16.5 dpc. Also expressed in the ossification region of developing bones and in the periosteum.

The protein resides in the nucleus. The protein localises to the chromosome. It carries out the reaction L-lysyl(36)-[histone H3] + 2 S-adenosyl-L-methionine = N(6),N(6)-dimethyl-L-lysyl(36)-[histone H3] + 2 S-adenosyl-L-homocysteine + 2 H(+). Histone methyltransferase that dimethylates Lys-36 of histone H3 (H3K36me2). Transcriptional intermediary factor capable of negatively influencing transcription. May also positively influence transcription. Essential for early post-implantation development. The sequence is that of Histone-lysine N-methyltransferase, H3 lysine-36 specific from Mus musculus (Mouse).